The following is a 292-amino-acid chain: tRNA pseudouridine synthase B (292 aa).

D38 serves as the catalytic Nucleophile.

The protein belongs to the pseudouridine synthase TruB family. Type 1 subfamily.

It carries out the reaction uridine(55) in tRNA = pseudouridine(55) in tRNA. Functionally, responsible for synthesis of pseudouridine from uracil-55 in the psi GC loop of transfer RNAs. This Streptococcus pneumoniae serotype 4 (strain ATCC BAA-334 / TIGR4) protein is tRNA pseudouridine synthase B.